The chain runs to 659 residues: Biosynthetic arginine decarboxylase (659 aa).

An N6-(pyridoxal phosphate)lysine modification is found at Lys-128. 308-318 (FDVGGGLGVDY) contacts substrate.

It belongs to the Orn/Lys/Arg decarboxylase class-II family. SpeA subfamily. Requires Mg(2+) as cofactor. Pyridoxal 5'-phosphate serves as cofactor.

It carries out the reaction L-arginine + H(+) = agmatine + CO2. It participates in amine and polyamine biosynthesis; agmatine biosynthesis; agmatine from L-arginine: step 1/1. Its function is as follows. Catalyzes the biosynthesis of agmatine from arginine. This is Biosynthetic arginine decarboxylase from Yersinia pestis.